Consider the following 178-residue polypeptide: dCTP deaminase, dUMP-forming (178 aa).

DCTP contacts are provided by residues 96–101, Asp-113, 121–123, Gln-142, Tyr-156, and Gln-163; these read RSSLGR and TLE. The Proton donor/acceptor role is filled by Glu-123.

The protein belongs to the dCTP deaminase family. Homotrimer.

The enzyme catalyses dCTP + 2 H2O = dUMP + NH4(+) + diphosphate. It functions in the pathway pyrimidine metabolism; dUMP biosynthesis; dUMP from dCTP: step 1/1. Its function is as follows. Bifunctional enzyme that catalyzes both the deamination of dCTP to dUTP and the hydrolysis of dUTP to dUMP without releasing the toxic dUTP intermediate. This is dCTP deaminase, dUMP-forming from Acetivibrio thermocellus (strain ATCC 27405 / DSM 1237 / JCM 9322 / NBRC 103400 / NCIMB 10682 / NRRL B-4536 / VPI 7372) (Clostridium thermocellum).